A 164-amino-acid chain; its full sequence is MPTRNMPLTKNPVESPDHEQELVLTVQYVADKTDIPNRRLFRKWVKAALSKPAEVVIRIVDRQEGEILNRDFRGKSSATNVLTFVYDDDVPLLGDIVLCAPVICNEAQQQGKDLTAHYAHLTIHGILHLQGYDHIRDEDAVVMESLETEIITRLGYPDPYVIQH.

3 residues coordinate Zn(2+): His-124, His-128, and His-134.

This sequence belongs to the endoribonuclease YbeY family. Zn(2+) serves as cofactor.

It is found in the cytoplasm. In terms of biological role, single strand-specific metallo-endoribonuclease involved in late-stage 70S ribosome quality control and in maturation of the 3' terminus of the 16S rRNA. This Nitrosomonas europaea (strain ATCC 19718 / CIP 103999 / KCTC 2705 / NBRC 14298) protein is Endoribonuclease YbeY.